A 500-amino-acid polypeptide reads, in one-letter code: Aspartyl/glutamyl-tRNA(Asn/Gln) amidotransferase subunit B (500 aa).

The protein belongs to the GatB/GatE family. GatB subfamily. As to quaternary structure, heterotrimer of A, B and C subunits.

It catalyses the reaction L-glutamyl-tRNA(Gln) + L-glutamine + ATP + H2O = L-glutaminyl-tRNA(Gln) + L-glutamate + ADP + phosphate + H(+). The catalysed reaction is L-aspartyl-tRNA(Asn) + L-glutamine + ATP + H2O = L-asparaginyl-tRNA(Asn) + L-glutamate + ADP + phosphate + 2 H(+). Functionally, allows the formation of correctly charged Asn-tRNA(Asn) or Gln-tRNA(Gln) through the transamidation of misacylated Asp-tRNA(Asn) or Glu-tRNA(Gln) in organisms which lack either or both of asparaginyl-tRNA or glutaminyl-tRNA synthetases. The reaction takes place in the presence of glutamine and ATP through an activated phospho-Asp-tRNA(Asn) or phospho-Glu-tRNA(Gln). The protein is Aspartyl/glutamyl-tRNA(Asn/Gln) amidotransferase subunit B of Brucella anthropi (strain ATCC 49188 / DSM 6882 / CCUG 24695 / JCM 21032 / LMG 3331 / NBRC 15819 / NCTC 12168 / Alc 37) (Ochrobactrum anthropi).